We begin with the raw amino-acid sequence, 163 residues long: Ribonuclease P protein component 4 (163 aa).

Positions 66, 69, 96, and 99 each coordinate Zn(2+). The disordered stretch occupies residues 110–163; that stretch reads GPRGGAPISPPAAEYGSGGRDSGEREDKGPQGPPRQGGRDNRQGGGHQGGPKGD. Positions 152-163 are enriched in gly residues; the sequence is QGGGHQGGPKGD.

The protein belongs to the eukaryotic/archaeal RNase P protein component 4 family. As to quaternary structure, consists of a catalytic RNA component and at least 4-5 protein subunits. Requires Zn(2+) as cofactor.

The protein localises to the cytoplasm. The catalysed reaction is Endonucleolytic cleavage of RNA, removing 5'-extranucleotides from tRNA precursor.. In terms of biological role, part of ribonuclease P, a protein complex that generates mature tRNA molecules by cleaving their 5'-ends. The sequence is that of Ribonuclease P protein component 4 from Aeropyrum pernix (strain ATCC 700893 / DSM 11879 / JCM 9820 / NBRC 100138 / K1).